A 287-amino-acid chain; its full sequence is uncharacterized protein (287 aa).

7 helical membrane-spanning segments follow: residues 27–47 (LTFS…FGVQ), 66–86 (LGTI…VTAF), 97–117 (WFWG…GVLL), 135–155 (IVFA…LSAL), 171–191 (IFIW…VLNF), 205–225 (LFPG…VYFV), and 254–274 (SALF…YFIL).

Its subcellular location is the cell membrane. This is an uncharacterized protein from Mycoplasma pneumoniae (strain ATCC 29342 / M129 / Subtype 1) (Mycoplasmoides pneumoniae).